Consider the following 181-residue polypeptide: Peptidyl-tRNA hydrolase 2, mitochondrial (181 aa).

Residues 10–32 (YLVHPGTLSLAAGVACGMCLGWG) traverse the membrane as a helical segment. Glycyl lysine isopeptide (Lys-Gly) (interchain with G-Cter in ubiquitin) cross-links involve residues Lys-78, Lys-83, Lys-97, Lys-108, Lys-117, and Lys-179.

The protein belongs to the PTH2 family. As to quaternary structure, monomer. Post-translationally, ubiquitinated by PRKN during mitophagy, leading to its degradation and enhancement of mitophagy. Deubiquitinated by USP30.

The protein resides in the mitochondrion outer membrane. It catalyses the reaction an N-acyl-L-alpha-aminoacyl-tRNA + H2O = an N-acyl-L-amino acid + a tRNA + H(+). Functionally, peptidyl-tRNA hydrolase which releases tRNAs from the ribosome during protein synthesis. Promotes caspase-independent apoptosis by regulating the function of two transcriptional regulators, AES and TLE1. The protein is Peptidyl-tRNA hydrolase 2, mitochondrial (Ptrh2) of Mus musculus (Mouse).